Here is a 211-residue protein sequence, read N- to C-terminus: Protein-L-isoaspartate O-methyltransferase (211 aa).

Ser-62 is a catalytic residue.

This sequence belongs to the methyltransferase superfamily. L-isoaspartyl/D-aspartyl protein methyltransferase family.

It localises to the cytoplasm. The enzyme catalyses [protein]-L-isoaspartate + S-adenosyl-L-methionine = [protein]-L-isoaspartate alpha-methyl ester + S-adenosyl-L-homocysteine. Catalyzes the methyl esterification of L-isoaspartyl residues in peptides and proteins that result from spontaneous decomposition of normal L-aspartyl and L-asparaginyl residues. It plays a role in the repair and/or degradation of damaged proteins. The sequence is that of Protein-L-isoaspartate O-methyltransferase from Shewanella baltica (strain OS195).